Consider the following 251-residue polypeptide: MTDRIRPLIAGNWKMNGLKASAAEFEAMLAGAAEVTGKADLLVCPPATLLAAFAEKTRGGKAVAVGAQDCHAKASGAHTGDISAEMLADAGASAVIVGHSERRADHGESDVVVHQKAEAAWRAGLVAIVCVGETQQQRDAGLTLEILRGQLTLSLPEGSRADNLIVAYEPVWAIGTGLTPTAGDVEQIHSFIRQLLIVRFKEQGARMRILYGGSVKPSNAAELMAVANVNGALVGGASLKAADFLAIAKGC.

Residue 12 to 14 (NWK) coordinates substrate. Catalysis depends on histidine 99, which acts as the Electrophile. Catalysis depends on glutamate 169, which acts as the Proton acceptor. Substrate is bound by residues glycine 175, serine 214, and 235–236 (GG).

It belongs to the triosephosphate isomerase family. In terms of assembly, homodimer.

The protein localises to the cytoplasm. The catalysed reaction is D-glyceraldehyde 3-phosphate = dihydroxyacetone phosphate. It functions in the pathway carbohydrate biosynthesis; gluconeogenesis. It participates in carbohydrate degradation; glycolysis; D-glyceraldehyde 3-phosphate from glycerone phosphate: step 1/1. Functionally, involved in the gluconeogenesis. Catalyzes stereospecifically the conversion of dihydroxyacetone phosphate (DHAP) to D-glyceraldehyde-3-phosphate (G3P). The sequence is that of Triosephosphate isomerase from Bradyrhizobium sp. (strain ORS 278).